A 118-amino-acid chain; its full sequence is MIITVCKGKIHRAVVTEAELHYEGSLTVDQDLMDMAGMKPYEQVSVVNVNNGARFETYLIVGERGSGTICLNGAAARLGMKGDKVIIITYGQVEEKDLPNDYQPKVVFVDENNRPKKA.

Ser-25 functions as the Schiff-base intermediate with substrate; via pyruvic acid in the catalytic mechanism. The residue at position 25 (Ser-25) is a Pyruvic acid (Ser). Substrate is bound at residue Thr-57. Tyr-58 acts as the Proton donor in catalysis. Residue 73-75 (GAA) coordinates substrate.

This sequence belongs to the PanD family. In terms of assembly, heterooctamer of four alpha and four beta subunits. Pyruvate is required as a cofactor. In terms of processing, is synthesized initially as an inactive proenzyme, which is activated by self-cleavage at a specific serine bond to produce a beta-subunit with a hydroxyl group at its C-terminus and an alpha-subunit with a pyruvoyl group at its N-terminus.

The protein resides in the cytoplasm. It catalyses the reaction L-aspartate + H(+) = beta-alanine + CO2. The protein operates within cofactor biosynthesis; (R)-pantothenate biosynthesis; beta-alanine from L-aspartate: step 1/1. Its function is as follows. Catalyzes the pyruvoyl-dependent decarboxylation of aspartate to produce beta-alanine. The protein is Aspartate 1-decarboxylase of Leptospira biflexa serovar Patoc (strain Patoc 1 / Ames).